The chain runs to 48 residues: M-oxotoxin-Ot1a (48 aa).

As to expression, expressed by the venom gland.

It localises to the secreted. The protein resides in the target cell membrane. In terms of biological role, disrupts cell membranes, particularly those rich in phosphocholine, through formation of pores. Has antimicrobial activity against Gram-negative bacterium E.coli, Gram-positive bacteria B.subtilis and S.aureus, and hemolytic activity against sheep, pig and guinea pig erythrocytes. Has insecticidal activity against S.frugiperda ovarian cells by opening non-selective ion channels. Enhances the insecticidal activity of spider venom neurotoxic peptides. In Oxyopes takobius (Lynx spider), this protein is M-oxotoxin-Ot1a.